Reading from the N-terminus, the 117-residue chain is Large ribosomal subunit protein bL20 (117 aa).

Belongs to the bacterial ribosomal protein bL20 family.

Its function is as follows. Binds directly to 23S ribosomal RNA and is necessary for the in vitro assembly process of the 50S ribosomal subunit. It is not involved in the protein synthesizing functions of that subunit. The sequence is that of Large ribosomal subunit protein bL20 from Lawsonia intracellularis (strain PHE/MN1-00).